The chain runs to 332 residues: Cell division protein ZipA (332 aa).

Residues 1 to 6 (MMQDLR) lie on the Periplasmic side of the membrane. A helical transmembrane segment spans residues 7–27 (LILIVVGAIAIIALLLHGLWT). Residues 28-332 (SRKERSSLFR…RIRDVLKANA (305 aa)) are Cytoplasmic-facing. The span at 40-51 (PVKRAKKARDET) shows a compositional bias: basic and acidic residues. Residues 40-189 (PVKRAKKARD…VQPAPQQPAE (150 aa)) are disordered. The span at 76-88 (SFDSASVDSSSFD) shows a compositional bias: low complexity. A compositionally biased stretch (basic and acidic residues) spans 93–105 (AREDVRSEAKSPF).

This sequence belongs to the ZipA family. As to quaternary structure, interacts with FtsZ via their C-terminal domains.

It is found in the cell inner membrane. Its function is as follows. Essential cell division protein that stabilizes the FtsZ protofilaments by cross-linking them and that serves as a cytoplasmic membrane anchor for the Z ring. Also required for the recruitment to the septal ring of downstream cell division proteins. In Pectobacterium atrosepticum (strain SCRI 1043 / ATCC BAA-672) (Erwinia carotovora subsp. atroseptica), this protein is Cell division protein ZipA.